We begin with the raw amino-acid sequence, 1250 residues long: MSKNSNVNNNRSQEPNNMFVQTTGGGKNAPKQIHVAHRRSQSELTNLMIEQFTLQKQLEQVQAQQQQLMAQQQQLAQQTGQYLSGNSGSNNHFTPQPPHPHYNSNGNSPGMSAGGSRSRTHSRNNSGYYHNSYDNNNNSNNPGSNSHRKTSSQSSIYGHSRRHSLGLNEAKKAAAEEQAKRISGGEAGVTVKIDSVQADSGSNSTTEQSDFKFPPPPNAHQGHRRATSNLSPPSFKFPPNSHGDNDDEFIATSSTHRRSKTRNNEYSPGINSNWRNQSQQPQQQLSPFRHRGSNSRDYNSFNTLEPPAIFQQGHKHRASNSSVHSFSSQGNNNGGGRKSLFAPYLPQANIPELIQEGRLVAGILRVNKKNRSDAWVSTDGALDADIYICGSKDRNRALEGDLVAVELLVVDDVWESKKEKEEKKRRKDASMQHDLIPLNSSDDYHNDASVTAATSNNFLSSPSSSDSLSKDDLSVRRKRSSTINNDSDSLSSPTKSGVRRRSSLKQRPTQKKNDDVEVEGQSLLLVEEEEINDKYKPLYAGHVVAVLDRIPGQLFSGTLGLLRPSQQANSDNNKPPQSPKIAWFKPTDKKVPLIAIPTELAPKDFVENADKYSEKLFVASIKRWPITSLHPFGILVSELGDIHDPDTEIDSILRDNNFLSNEYLDQKNPQKEKPSFQPLPLTAESLEYRRNFTDTNEYNIFAISELGWVSEFALHVRNNGNGTLELGCHVVDVTSHIEEGSSVDRRARKRSSAVFMPQKLVNLLPQSFNDELSLAPGKESATLSVVYTLDSSTLRIKSTWVGESTISPSNILSLEQLDEKLSTGSPTSYLSTVQEIARSFYARRINDPEATLLPTLSLLESLDDEKVKVDLNILDRTLGFVVINEIKRKVNSTVAEKIYTKLGDLALLRRQMQPIATKMASFRKKIQNFGYNFDTNTADELIKGVLKIKDDDVRVGIEILLFKTMPRARYFIAGKVDPDQYGHYALNLPIYTHFTAPMRRYADHVVHRQLKAVIHDTPYTEDMEALKITSEYCNFKKDCAYQAQEQAIHLLLCKTINDMGNTTGQLLTMATVLQVYESSFDVFIPEFGIEKRVHGDQLPLIKAEFDGTNRVLELHWQPGVDSATFIPADEKNPKSYRNSIKNKFRSTAAEIANIELDKEAESEPLISDPLSKELSDLHLTVPNLRLPSASDNKQNALEKFISTTETRIENDNYIQEIHELQKIPILLRAEVGMALPCLTVRALNPFMKRV.

Over residues 1-22 (MSKNSNVNNNRSQEPNNMFVQT) the composition is skewed to polar residues. Residues 1 to 32 (MSKNSNVNNNRSQEPNNMFVQTTGGGKNAPKQ) form a disordered region. Serine 2 carries the post-translational modification N-acetylserine. Serine 40 carries the post-translational modification Phosphoserine. A disordered region spans residues 79–163 (TGQYLSGNSG…SSIYGHSRRH (85 aa)). Over residues 84–94 (SGNSGSNNHFT) the composition is skewed to polar residues. The span at 124–145 (NNSGYYHNSYDNNNNSNNPGSN) shows a compositional bias: low complexity. Residues serine 164 and serine 183 each carry the phosphoserine modification. Over residues 197-208 (QADSGSNSTTEQ) the composition is skewed to polar residues. 3 disordered regions span residues 197 to 338 (QADS…GGRK), 418 to 443 (KEKEEKKRRKDASMQHDLIPLNSSDD), and 455 to 517 (SNNF…DDVE). Threonine 227 is subject to Phosphothreonine. Residues 264–276 (NEYSPGINSNWRN) show a composition bias toward polar residues. Residues 277-287 (QSQQPQQQLSP) show a composition bias toward low complexity. Residues serine 286 and serine 322 each carry the phosphoserine modification. Polar residues predominate over residues 319 to 329 (SNSSVHSFSSQ). Polar residues predominate over residues 481-495 (STINNDSDSLSSPTK). Phosphoserine occurs at positions 491 and 492. Residues 497–510 (GVRRRSSLKQRPTQ) show a composition bias toward basic residues. The CSD2 domain occupies 582-657 (AWFKPTDKKV…EIDSILRDNN (76 aa)). The residue at position 688 (tyrosine 688) is a Phosphotyrosine. The RNB domain maps to 694 to 1015 (DTNEYNIFAI…VHRQLKAVIH (322 aa)). One can recognise a DIS3L2 C-terminal domain in the interval 1064–1148 (GQLLTMATVL…SIKNKFRSTA (85 aa)).

This sequence belongs to the RNR ribonuclease family.

Functionally, can suppress the lethality due to deletion of SIT4, and partially the defects due to BCY1 disruption. Is implicated in the control of the cell cycle G1 phase. The sequence is that of Protein SSD1 (SSD1) from Saccharomyces cerevisiae (strain ATCC 204508 / S288c) (Baker's yeast).